The following is a 140-amino-acid chain: ATP synthase epsilon chain (140 aa).

It belongs to the ATPase epsilon chain family. As to quaternary structure, F-type ATPases have 2 components, CF(1) - the catalytic core - and CF(0) - the membrane proton channel. CF(1) has five subunits: alpha(3), beta(3), gamma(1), delta(1), epsilon(1). CF(0) has three main subunits: a, b and c.

The protein resides in the cell inner membrane. Its function is as follows. Produces ATP from ADP in the presence of a proton gradient across the membrane. The polypeptide is ATP synthase epsilon chain (Marinobacter nauticus (strain ATCC 700491 / DSM 11845 / VT8) (Marinobacter aquaeolei)).